Reading from the N-terminus, the 347-residue chain is CRISPR-associated endonuclease Cas1 4 (347 aa).

Residues Met1–Pro21 show a composition bias toward basic and acidic residues. Residues Met1 to Leu25 form a disordered region. Glu176, His241, and Glu256 together coordinate Mn(2+).

This sequence belongs to the CRISPR-associated endonuclease Cas1 family. As to quaternary structure, homodimer, forms a heterotetramer with a Cas2 homodimer. It depends on Mg(2+) as a cofactor. Mn(2+) serves as cofactor.

In terms of biological role, CRISPR (clustered regularly interspaced short palindromic repeat), is an adaptive immune system that provides protection against mobile genetic elements (viruses, transposable elements and conjugative plasmids). CRISPR clusters contain spacers, sequences complementary to antecedent mobile elements, and target invading nucleic acids. CRISPR clusters are transcribed and processed into CRISPR RNA (crRNA). Acts as a dsDNA endonuclease. Involved in the integration of spacer DNA into the CRISPR cassette. The chain is CRISPR-associated endonuclease Cas1 4 from Methanospirillum hungatei JF-1 (strain ATCC 27890 / DSM 864 / NBRC 100397 / JF-1).